A 412-amino-acid polypeptide reads, in one-letter code: MRFFFVFLAIVLFQGIHGAYVEIGYSLRNITFDGLDTDDYNPKFNIPTGLAVDPEGYRLFIAIPRRKPKVPYTVAELNMVMNPGFPVERAPSFEKFKKFNGEGKKDLVNVYQPVIDDCRRLWVLDIGKVEYTGGDADQYPKGKPTLIAYDLKKDHTPEIHRFEIPDDLYSSQVEFGGFAVDVVNTKGDCTESFVYLTNFKDNSLIVYDETQKKAWKFTDKTFEADKESTFSYSGEEQMKYKVGLFGIALGDRDEMGHRPACYIAGSSTKVYSVNTKELKTENGQLNPQLHGDRGKYTDAIALAYDPEHKVLYFAESDSRQVSCWNVNMELKPDNTDVIFSSARFTFGTDILVDSKGMLWIMANGHPPVEDQEKIWKMRFVNRKIRIMKVDTERVFKYSRCNPNYKPPKEIEV.

The N-terminal stretch at 1-18 (MRFFFVFLAIVLFQGIHG) is a signal peptide. Asn29 carries an N-linked (GlcNAc...) asparagine glycan.

It belongs to the major royal jelly protein family. Salivary gland.

The protein localises to the secreted. Its function is as follows. Probably modulates blood feeding of sand flies on vertebrate species by binding and sequestering different mediators involved in the host response. Binds biogenic amines. Binds serotonin with high affinity. Binds noradrenaline but not adrenaline. Binds dopamine and octopamine. Binds histamine. Inhibits host smooth muscle contraction induced by histamine in bioassay with guinea pig ileum. Immunogenic; elicits antibody production in the host. Functions as a chemoattractant for host neutrophils; likely acts through a G-protein-coupled receptor and effect is dependent on calcium influx. The protein is Yellow-related salivary protein LJM17 of Lutzomyia longipalpis (Sand fly).